The sequence spans 219 residues: Ribose-5-phosphate isomerase A (219 aa).

Substrate contacts are provided by residues 28–31, 81–84, and 94–97; these read TGST, DGAD, and KGGG. Glutamate 103 acts as the Proton acceptor in catalysis. Position 121 (lysine 121) interacts with substrate.

The protein belongs to the ribose 5-phosphate isomerase family. As to quaternary structure, homodimer.

The enzyme catalyses aldehydo-D-ribose 5-phosphate = D-ribulose 5-phosphate. It participates in carbohydrate degradation; pentose phosphate pathway; D-ribose 5-phosphate from D-ribulose 5-phosphate (non-oxidative stage): step 1/1. Its function is as follows. Catalyzes the reversible conversion of ribose-5-phosphate to ribulose 5-phosphate. In Escherichia fergusonii (strain ATCC 35469 / DSM 13698 / CCUG 18766 / IAM 14443 / JCM 21226 / LMG 7866 / NBRC 102419 / NCTC 12128 / CDC 0568-73), this protein is Ribose-5-phosphate isomerase A.